The chain runs to 948 residues: P cell-type agglutination protein map4 (948 aa).

Residues 1–23 (MNSYAILLSLFFSFERLLTLANA) form the signal peptide. N-linked (GlcNAc...) asparagine glycans are attached at residues Asn-31, Asn-32, and Asn-57. Disordered stretches follow at residues 136 to 174 (IPRG…IGTG) and 253 to 333 (FYET…PTTY). The span at 149 to 174 (PTYSASDSSATTITSSSPSTSIIGTG) shows a compositional bias: low complexity. A compositionally biased stretch (polar residues) spans 253-264 (FYETKSSTSSVP). Residues 265–332 (TQTIDSSSFT…PSLSSALPTT (68 aa)) are compositionally biased toward low complexity. The N-linked (GlcNAc...) asparagine glycan is linked to Asn-383. The segment at 408 to 432 (LTSSTKKIPSTTLPTSSKMITTTTP) is disordered. Asn-436, Asn-469, Asn-491, Asn-522, Asn-553, Asn-568, and Asn-598 each carry an N-linked (GlcNAc...) asparagine glycan. 5 consecutive repeat copies span residues 617-652 (SYVT…IPTP), 653-688 (SWVT…IPTP), 689-724 (SWVT…IPTP), 725-760 (SWVT…IPTP), and 761-796 (SWVT…VPTP). Residues 617-796 (SYVTETTTSG…GTVLIDVPTP (180 aa)) are 5 X 36 AA approximate tandem repeats. One can recognise a DIPSY domain in the interval 796–948 (PTASSSPFPS…ANVVLRALEY (153 aa)). A glycan (N-linked (GlcNAc...) asparagine) is linked at Asn-921.

It belongs to the mam3/map4 family.

It localises to the cell surface. Its function is as follows. P cell-type specific protein which involved in agglutination during conjugation. This chain is P cell-type agglutination protein map4, found in Schizosaccharomyces pombe (strain 972 / ATCC 24843) (Fission yeast).